The primary structure comprises 467 residues: Tubulointerstitial nephritis antigen-like (467 aa).

Residues 1-21 (MWGCPLGLLLLLLAGQAALEA) form the signal peptide. An SMB domain is found at 49-96 (EQDMCCRGRADECALPYLGATCYCDLFCNRTVSDCCPDFWDFCLGIPP). Disulfide bonds link cysteine 53–cysteine 72, cysteine 70–cysteine 72, cysteine 70–cysteine 84, cysteine 76–cysteine 83, and cysteine 84–cysteine 91. N-linked (GlcNAc...) asparagine glycosylation is present at asparagine 77. Asparagine 160 is a glycosylation site (N-linked (GlcNAc...) asparagine).

Belongs to the peptidase C1 family. Post-translationally, glycosylated.

The protein resides in the secreted. May be implicated in the adrenocortical zonation and in mechanisms for repressing the CYP11B1 gene expression in adrenocortical cells. This is a non catalytic peptidase C1 family protein. The polypeptide is Tubulointerstitial nephritis antigen-like (Tinagl1) (Rattus norvegicus (Rat)).